A 521-amino-acid polypeptide reads, in one-letter code: Zinc finger protein 394 (521 aa).

The segment at 1 to 45 is disordered; sequence MAAGSGVVPPPLGAGLCTVKVEEDSPGNQESSGSGDWQNPETSRK. Lysine 20 is covalently cross-linked (Glycyl lysine isopeptide (Lys-Gly) (interchain with G-Cter in SUMO2)). Positions 26 to 41 are enriched in polar residues; sequence PGNQESSGSGDWQNPE. Positions 38 to 133 constitute an SCAN box domain; it reads QNPETSRKQF…RALDRASPQG (96 aa). In terms of domain architecture, KRAB spans 135-196; it reads MTFKDVAESL…KQEILKEAEP (62 aa). A Glycyl lysine isopeptide (Lys-Gly) (interchain with G-Cter in SUMO2) cross-link involves residue lysine 259. C2H2-type zinc fingers lie at residues 327–349, 355–377, and 383–405; these read YKCD…QRIH, YQCQ…QRTH, and YACP…QRTH. A C2H2-type 4; atypical zinc finger spans residues 411–432; the sequence is YKCEECGEIVHVSSLFRHQRLH. Lysine 412 participates in a covalent cross-link: Glycyl lysine isopeptide (Lys-Gly) (interchain with G-Cter in SUMO2). 3 C2H2-type zinc fingers span residues 438-460, 466-488, and 494-516; these read YKCG…QRTH, YACV…QRTH, and YKCF…QRIH.

This sequence belongs to the krueppel C2H2-type zinc-finger protein family. As to expression, expressed at high level in testis.

The protein resides in the nucleus. Functionally, may be involved in transcriptional regulation. This is Zinc finger protein 394 (Znf394) from Mus musculus (Mouse).